The sequence spans 513 residues: V-type proton ATPase subunit B, kidney isoform (513 aa).

The span at 1-18 shows a compositional bias: polar residues; that stretch reads MATTVDSRSSGFTGNSCD. The disordered stretch occupies residues 1 to 21; the sequence is MATTVDSRSSGFTGNSCDPGT. Arg394 contacts ATP. The short motif at 510-513 is the PDZ-binding element; that stretch reads DTAL.

It belongs to the ATPase alpha/beta chains family. As to quaternary structure, V-ATPase is a heteromultimeric enzyme made up of two complexes: the ATP-hydrolytic V1 complex and the proton translocation V0 complex. The V1 complex consists of three catalytic AB heterodimers that form a heterohexamer, three peripheral stalks each consisting of EG heterodimers, one central rotor including subunits D and F, and the regulatory subunits C and H. The proton translocation complex V0 consists of the proton transport subunit a, a ring of proteolipid subunits c9c'', rotary subunit d, subunits e and f, and the accessory subunits ATP6AP1/Ac45 and ATP6AP2/PRR. Forms a complex with NHERF1 and SCL4A7. Highly expressed in the kidney; found in early distal nephron, encompassing thick ascending limbs and distal convoluted tubules and in the alpha-intercalated cells of the cortical collecting ducts (at protein level). Expressed in the olfactory epithelium (at protein level). Expressed at lower levels in the testis.

The protein localises to the apical cell membrane. It is found in the basolateral cell membrane. In terms of biological role, non-catalytic subunit of the V1 complex of vacuolar(H+)-ATPase (V-ATPase), a multisubunit enzyme composed of a peripheral complex (V1) that hydrolyzes ATP and a membrane integral complex (V0) that translocates protons. V-ATPase is responsible for acidifying and maintaining the pH of intracellular compartments and in some cell types, is targeted to the plasma membrane, where it is responsible for acidifying the extracellular environment. Essential for the proper assembly and activity of V-ATPase. In renal intercalated cells, mediates secretion of protons (H+) into the urine thereby ensuring correct urinary acidification. Required for optimal olfactory function by mediating the acidification of the nasal olfactory epithelium. This chain is V-type proton ATPase subunit B, kidney isoform (Atp6v1b1), found in Mus musculus (Mouse).